The chain runs to 132 residues: MASRMGMVAIVSLFVCALVASTSVNANVWQTDEDAFYSTNKLGVNGNMEMAQQQSGFIGHRPRLASFNRASKQLDSEKRPVPSGPDPIHHSIPSHAPQHPPSYGKAPYEDDRSRASPGLSNPIGPPPFLDRY.

The N-terminal stretch at 1–26 is a signal peptide; it reads MASRMGMVAIVSLFVCALVASTSVNA. The tract at residues 68 to 132 is disordered; it reads NRASKQLDSE…IGPPPFLDRY (65 aa). Hydroxyproline occurs at positions 82 and 85. An O-linked (Ara...) hydroxyproline glycan is attached at proline 85. Residues 123-132 are compositionally biased toward pro residues; sequence IGPPPFLDRY.

It belongs to the CLV3/ESR signal peptide family. The O-glycosylation (arabinosylation) of the hydroxyproline Pro-85 enhances binding affinity of the ESR2p peptide for its receptor. In terms of tissue distribution, seed endosperm.

The protein localises to the secreted. It localises to the extracellular space. Its function is as follows. Extracellular signal peptide that regulates cell fate. In Zea mays (Maize), this protein is CLAVATA3/ESR (CLE)-related protein ESR2.